A 99-amino-acid chain; its full sequence is Citrate lyase acyl carrier protein (99 aa).

Residue serine 14 is modified to O-(phosphoribosyl dephospho-coenzyme A)serine.

It belongs to the CitD family. As to quaternary structure, oligomer with a subunit composition of (alpha,beta,gamma)6.

Its subcellular location is the cytoplasm. Its function is as follows. Covalent carrier of the coenzyme of citrate lyase. The protein is Citrate lyase acyl carrier protein of Edwardsiella ictaluri (strain 93-146).